We begin with the raw amino-acid sequence, 105 residues long: MRGGGNMQQMMKQMQKMQKKMAEEQEKLKDEKVEGSAGGGMVKVVVTGHKEVVDVVIDEEAVDPDDVEMLQDLVLAATNEAMNKADELTSERLGKHTKGLNIPGM.

The tract at residues 1–36 is disordered; sequence MRGGGNMQQMMKQMQKMQKKMAEEQEKLKDEKVEGS. Low complexity predominate over residues 7-16; that stretch reads MQQMMKQMQK. Residues 20 to 34 are compositionally biased toward basic and acidic residues; it reads KMAEEQEKLKDEKVE.

The protein belongs to the YbaB/EbfC family. Homodimer.

Its subcellular location is the cytoplasm. The protein localises to the nucleoid. Functionally, binds to DNA and alters its conformation. May be involved in regulation of gene expression, nucleoid organization and DNA protection. The protein is Nucleoid-associated protein Sca_0120 of Staphylococcus carnosus (strain TM300).